A 349-amino-acid polypeptide reads, in one-letter code: Protein POOR HOMOLOGOUS SYNAPSIS 1 (349 aa).

The protein localises to the cytoplasm. Required for accurate chromosome segregation in meiosis. Required for pairing to occur between homologous chromosomes. Acts in early recombination steps and ensures pairing fidelity and proper repair of meiotic DNA double-strand-breaks. Regulates recombination and pairing of homologous chromosomes during meiotic prophase by controlling transport of RAD50 from cytoplasm to the nucleus. May affect pairing of the gene-rich fraction of the genome rather than preventing pairing between repetitive DNA elements. The protein is Protein POOR HOMOLOGOUS SYNAPSIS 1 of Arabidopsis thaliana (Mouse-ear cress).